The primary structure comprises 153 residues: Membrane protein FAM174B (153 aa).

The N-terminal stretch at 1–27 is a signal peptide; the sequence is MSALPPQPPPPLLLLLLALLAAPAALA. Residues 28-84 lie on the Extracellular side of the membrane; sequence RRAESASASQPEAEHQPPPGPGNATQLGSGMAGGGSSNSSVDAVVTRISSLLRDLPT. Residues 31–67 are disordered; the sequence is ESASASQPEAEHQPPPGPGNATQLGSGMAGGGSSNSS. Asn50 carries N-linked (GlcNAc...) asparagine glycosylation. The chain crosses the membrane as a helical span at residues 85–105; the sequence is LKATVIVACAFSALLIACLLL. Topologically, residues 106–153 are cytoplasmic; the sequence is RVFRLGKRLKKTRKYDIITTPAERVEMAPLNEEDDEDEDSTVFDIKYR.

The protein belongs to the FAM174 family.

The protein resides in the cell membrane. The protein localises to the golgi apparatus. In terms of biological role, essential for Golgi structural integrity. The protein is Membrane protein FAM174B (Fam174b) of Mus musculus (Mouse).